The chain runs to 453 residues: uncharacterized protein (453 aa).

Disordered stretches follow at residues Y140 to Q161 and T311 to S332.

This is an uncharacterized protein from Caenorhabditis elegans.